Consider the following 113-residue polypeptide: Flagellar transcriptional regulator FlhD (113 aa).

The protein belongs to the FlhD family. Homodimer; disulfide-linked. Forms a heterohexamer composed of two FlhC and four FlhD subunits. Each FlhC binds a FlhD dimer, forming a heterotrimer, and a hexamer assembles by dimerization of two heterotrimers.

The protein resides in the cytoplasm. Functionally, functions in complex with FlhC as a master transcriptional regulator that regulates transcription of several flagellar and non-flagellar operons by binding to their promoter region. Activates expression of class 2 flagellar genes, including fliA, which is a flagellum-specific sigma factor that turns on the class 3 genes. Also regulates genes whose products function in a variety of physiological pathways. In Salmonella typhi, this protein is Flagellar transcriptional regulator FlhD.